The chain runs to 494 residues: Pre-hexon-linking protein IIIa (494 aa).

The tract at residues 1–101 (MAALSPTVRA…ALLQRVGRYN (101 aa)) is peripentonal hexon-tethering domain. A binding to hexon-linking protein region spans residues 132–245 (GSLVALNGFL…FTDSRTVNGD (114 aa)). Threonine 268 is modified (phosphothreonine; by host). Phosphoserine; by host occurs at positions 439 and 456. Residues 484–494 (TNPFKHLQPQF) constitute a propeptide that is removed on maturation.

The protein belongs to the adenoviridae hexon-linking protein IIIa family. In terms of assembly, interacts with hexon proteins; this interaction tethers the peripentonal hexons to hexons situated in the facet. Interacts with the penton protein (via N-terminus). Interacts with packaging protein 3; this interaction is required to promote correct genome packaging. In terms of processing, cleaved near the C-terminus by the viral protease during virion maturation to form the mature protein.

It localises to the virion. The protein localises to the host nucleus. Its function is as follows. Structural component of the virion that acts as a cement protein on the capsid exterior which mediates the interactions between the hexons, including the peripentonal hexons, and reaches all the way to the penton vertices. Two hexon linking proteins IIIa, one from each facet, stabilize the unique edge interface between a pair of facets. As the virus enters the host cell, hexon linking proteins IIIa are shed concomitant with virion acidification in the endosome. During virus assembly, seems to play a role in the serotype specificity of the packaging of viral DNA via its interaction with packaging protein 3. The protein is Pre-hexon-linking protein IIIa of Murine adenovirus A serotype 1 (MAdV-1).